Here is a 201-residue protein sequence, read N- to C-terminus: Recombination protein RecR (201 aa).

A C4-type zinc finger spans residues 57-72 (CRYCRNLSDAEVCLLC). Residues 80–175 (QQICVVETPA…QATRLAYGVP (96 aa)) form the Toprim domain.

Belongs to the RecR family.

Functionally, may play a role in DNA repair. It seems to be involved in an RecBC-independent recombinational process of DNA repair. It may act with RecF and RecO. This Dichelobacter nodosus (strain VCS1703A) protein is Recombination protein RecR.